Reading from the N-terminus, the 293-residue chain is Ribonuclease HIII (293 aa).

An RNase H type-2 domain is found at 78-293 (LPLIGTDEVG…TEKAKKRLER (216 aa)). Positions 84, 85, and 187 each coordinate a divalent metal cation.

Belongs to the RNase HII family. RnhC subfamily. The cofactor is Mn(2+). Requires Mg(2+) as cofactor.

It localises to the cytoplasm. It carries out the reaction Endonucleolytic cleavage to 5'-phosphomonoester.. In terms of biological role, endonuclease that specifically degrades the RNA of RNA-DNA hybrids. This chain is Ribonuclease HIII, found in Streptococcus pneumoniae serotype 19F (strain G54).